A 213-amino-acid polypeptide reads, in one-letter code: Orotate phosphoribosyltransferase (213 aa).

Lys26 contacts 5-phospho-alpha-D-ribose 1-diphosphate. Phe34–Phe35 contributes to the orotate binding site. Residues Tyr72–Lys73, Arg99, Lys100, Lys103, His105, and Asp124–Ala132 contribute to the 5-phospho-alpha-D-ribose 1-diphosphate site. Orotate contacts are provided by Thr128 and Arg156.

The protein belongs to the purine/pyrimidine phosphoribosyltransferase family. PyrE subfamily. As to quaternary structure, homodimer. Mg(2+) is required as a cofactor.

The enzyme catalyses orotidine 5'-phosphate + diphosphate = orotate + 5-phospho-alpha-D-ribose 1-diphosphate. It participates in pyrimidine metabolism; UMP biosynthesis via de novo pathway; UMP from orotate: step 1/2. Functionally, catalyzes the transfer of a ribosyl phosphate group from 5-phosphoribose 1-diphosphate to orotate, leading to the formation of orotidine monophosphate (OMP). The sequence is that of Orotate phosphoribosyltransferase from Vibrio vulnificus (strain CMCP6).